Here is a 751-residue protein sequence, read N- to C-terminus: Semaphorin-3C (751 aa).

A signal peptide spans 1–20 (MAFRAICVLVGVFICSICVR). The 484-residue stretch at 28–511 (RVYLTFDELR…SNEGVSQVSL (484 aa)) folds into the Sema domain. Asn81 is a glycosylation site (N-linked (GlcNAc...) asparagine). A disulfide bridge links Cys101 with Cys112. An N-linked (GlcNAc...) asparagine glycan is attached at Asn123. Cys130 and Cys139 form a disulfide bridge. Residues Asn252 and Asn268 are each glycosylated (N-linked (GlcNAc...) asparagine). Cystine bridges form between Cys266–Cys378 and Cys290–Cys338. Asn465 carries an N-linked (GlcNAc...) asparagine glycan. Cys514 and Cys532 form a disulfide bridge. An Ig-like C2-type domain is found at 571-655 (AYRNAAEIVQ…TENSFKQTIA (85 aa)). N-linked (GlcNAc...) asparagine glycosylation is found at Asn585 and Asn586. Residues Cys643 and Cys709 are joined by a disulfide bond.

Belongs to the semaphorin family. In terms of assembly, interacts with PLXND1.

Its subcellular location is the secreted. Its function is as follows. Binds to plexin family members and plays an important role in the regulation of developmental processes. Required for normal cardiovascular development during embryogenesis. Functions as attractant for growing axons, and thereby plays an important role in axon growth and axon guidance. The chain is Semaphorin-3C (Sema3c) from Mus musculus (Mouse).